A 248-amino-acid chain; its full sequence is Triosephosphate isomerase (248 aa).

Asparagine 10 and lysine 12 together coordinate substrate. The active-site Electrophile is histidine 95. Glutamate 165 functions as the Proton acceptor in the catalytic mechanism.

The protein belongs to the triosephosphate isomerase family. As to quaternary structure, homodimer.

The catalysed reaction is D-glyceraldehyde 3-phosphate = dihydroxyacetone phosphate. It participates in carbohydrate biosynthesis; gluconeogenesis. The protein operates within carbohydrate degradation; glycolysis; D-glyceraldehyde 3-phosphate from glycerone phosphate: step 1/1. This chain is Triosephosphate isomerase (TPI1), found in Zygosaccharomyces bailii.